Here is a 922-residue protein sequence, read N- to C-terminus: Periodic tryptophan protein 2 homolog (922 aa).

WD repeat units follow at residues 12–52 (GTVY…TLPI), 53–92 (QSKY…VLGE), 94–132 (KFFK…KQPN), 141–180 (THKS…VSYF), 182–221 (VKGS…EMEQ), 271–310 (GVKC…QLYK), 313–353 (ISSH…YILK), 356–395 (GHSY…CYIT), 398–439 (EHEG…NFRT), 443–485 (PNKT…DILS), 486–525 (GHQS…EIRE), 528–567 (QHTS…QIGL), 590–629 (SAGR…LIKK), and 691–731 (KKKQ…DPTD). The tract at residues 893 to 922 (ESKKNKEQEEDQFSDDEETVYQNNKKNKNK) is disordered. Residues 900-911 (QEEDQFSDDEET) show a composition bias toward acidic residues.

The protein belongs to the WD repeat PWP2 family. Part of the small subunit (SSU) processome, composed of more than 70 proteins and the RNA chaperone small nucleolar RNA (snoRNA) U3.

It is found in the nucleus. It localises to the nucleolus. In terms of biological role, part of the small subunit (SSU) processome, first precursor of the small eukaryotic ribosomal subunit. During the assembly of the SSU processome in the nucleolus, many ribosome biogenesis factors, an RNA chaperone and ribosomal proteins associate with the nascent pre-rRNA and work in concert to generate RNA folding, modifications, rearrangements and cleavage as well as targeted degradation of pre-ribosomal RNA by the RNA exosome. The chain is Periodic tryptophan protein 2 homolog (pwp2) from Dictyostelium discoideum (Social amoeba).